A 2134-amino-acid chain; its full sequence is Tudor domain-containing protein 6 (2134 aa).

The segment at 287–315 (RAPVGTDDEDSGSATWEEREESPDKPGSP) is disordered. A Phosphothreonine modification is found at Thr292. Tudor domains are found at residues 309–368 (PDKP…YFRM), 542–599 (RPEP…FRQL), 820–879 (YEGD…FFQV), and 1038–1092 (TLAP…AHDV). The interval 1271-1296 (SPMSGTKLDSALPERRMGEPSGRDLP) is disordered. Over residues 1282-1296 (LPERRMGEPSGRDLP) the composition is skewed to basic and acidic residues. Tudor domains are found at residues 1358 to 1417 (QWQS…DAVL) and 1570 to 1630 (CPQI…LLLV). 2 disordered regions span residues 1699-1733 (KKYAKTGVPKNDLSSEKRGPERKGSLASPDLGLKK) and 1860-1885 (LQHSPAGEEEKEELGLGSPMAPLSPG). Residues 1711–1722 (LSSEKRGPERKG) are compositionally biased toward basic and acidic residues. 2 positions are modified to phosphoserine: Ser1723 and Ser1726. Ser1925 is subject to Phosphoserine. Polar residues predominate over residues 1930 to 1939 (AVSQDIQGSR). The disordered stretch occupies residues 1930 to 1985 (AVSQDIQGSRCSEDERKAGYMGSSDDDHSRSPLLQHGKGGNSPAHDGRNLSEEEFP). Residues Ser1980, Ser2063, and Ser2115 each carry the phosphoserine modification.

Found in a mRNP complex (i.e. messenger ribonucleoproteins which correspond to mRNA with bound proteins), at least composed of TDRD1, TDRD6, TDRD7 and DDX4. Found in a complex, at least composed of PIWIL1, PIWIL2, DDX4 and TDRD6. Interacts with Tex19.1 and probably Tex19.2. Interacts with PRMT5. Interacts with SNRPB (when methylated); to trigger spliceosome formation. Undergoes proteolytic cleavage near the C-terminal by an unknown protease during the transition from meiosis I to meiosis II in primary spermatocytes. As to expression, testis specific. Expressed in primary spermatocytes at post natal (PN) day 17.5. Expressed in midpachytene stage of primary spermatocytes at PN16 and in round spermatids at PN22 (at protein level).

It is found in the cytoplasm. Functionally, tudor domain-containing protein involved in germ cell development, more specifically the formation of chromatoid body (during spermiogenesis), Balbiani body (during oogenesis), germ plasm (upon fertilization), and for proper miRNA expression and spliceosome maturation. Essential for RNA-dependent helicase UPF1 localization to chromatoid body, for UPF1-UPF2 and UPF1-DDX4 interactions which are required for mRNA degradation, using the extended 3' UTR-triggered nonsense-mediated mRNA decay (NMD) pathway. Involved in spliceosome maturation and mRNA splicing in prophase I spermatocytes through interaction with arginine N-methyltransferase PRMT5 and symmetrically arginine dimethylated SNRPB (small nuclear ribonucleoprotein-associated protein). The chain is Tudor domain-containing protein 6 from Mus musculus (Mouse).